Consider the following 192-residue polypeptide: Histone H3-like centromeric protein CSE4 (192 aa).

The segment at A88–Q190 is H3-like.

This sequence belongs to the histone H3 family. Component of centromeric nucleosomes, where DNA is wrapped around a histone octamer core. The octamer contains two molecules each of H2A, H2B, CSE4/CENPA and H4 assembled in one CSE4-H4 heterotetramer and two H2A-H2B heterodimers. Interacts with the inner kinetochore. In terms of processing, ubiquitinated. Is degraded through ubiquitin-mediated proteolysis when not protected by its association to the kinetochore.

The protein localises to the nucleus. The protein resides in the chromosome. It is found in the centromere. Histone H3-like nucleosomal protein that is specifically found in centromeric nucleosomes. Replaces conventional H3 in the nucleosome core of centromeric chromatin that serves as an assembly site for the inner kinetochore. Required for recruitment and assembly of kinetochore proteins, mitotic progression and chromosome segregation. May serve as an epigenetic mark that propagates centromere identity through replication and cell division. This Kluyveromyces marxianus (Yeast) protein is Histone H3-like centromeric protein CSE4 (CSE4).